The primary structure comprises 4047 residues: Cubilin homolog (4047 aa).

Positions 1–22 (MIPNLQLFLSLILFGLLNHVSS) are cleaved as a signal peptide. N-linked (GlcNAc...) asparagine glycosylation is found at Asn56, Asn92, and Asn127. In terms of domain architecture, EGF-like 1 spans 168 to 205 (AINACDPNKCSNGGTCIPSFGAKFTCLCPPHFTGTTCE). Cystine bridges form between Cys172–Cys183, Cys177–Cys193, Cys195–Cys204, Cys211–Cys227, Cys221–Cys236, Cys238–Cys247, Cys310–Cys321, Cys315–Cys330, Cys333–Cys344, Cys350–Cys363, Cys357–Cys372, Cys375–Cys386, Cys392–Cys403, Cys397–Cys418, Cys420–Cys434, Cys442–Cys453, Cys447–Cys463, Cys465–Cys474, Cys480–Cys491, Cys485–Cys500, Cys502–Cys511, Cys518–Cys544, Cys577–Cys601, Cys645–Cys667, Cys696–Cys719, and Cys769–Cys801. In terms of domain architecture, EGF-like 2; calcium-binding spans 207 to 248 (DIDECSVYNGTTAGCQNNGTCINNRGGFECQCQSGYHGSLCQ). Asn215 and Asn224 each carry an N-linked (GlcNAc...) asparagine glycan. One can recognise an EGF-like 3; calcium-binding domain in the interval 306 to 345 (DVNECESNPCHPGVDCINLPGSFVCSGCPKGYKTDGNVCI). Residues 346-387 (DVNECEGEIRVCSPLSKCHNTLGSYYCDSCPTGYSGDGGNCV) form the EGF-like 4; calcium-binding domain. 3 EGF-like domains span residues 388-435 (KDDS…EGCV), 438-475 (ASNV…KFCE), and 476-512 (KTSP…RACE). 10 CUB domains span residues 518–641 (CGSH…WETV), 645–763 (CGYR…YKFT), 769–934 (CGAE…YEML), 934–1061 (LCEK…YKTS), 1065–1182 (CGGV…FEAV), 1188–1300 (CDFT…YETI), 1304–1427 (CGGR…FTTL), 1428–1558 (CNGI…WNTL), 1560–1680 (CSRD…VEFV), and 1691–1841 (CGQV…MIPK). Asn528, Asn537, and Asn583 each carry an N-linked (GlcNAc...) asparagine glycan. 3 N-linked (GlcNAc...) asparagine glycosylation sites follow: Asn775, Asn806, and Asn811. Residues Cys877 and Cys896 are joined by a disulfide bond. N-linked (GlcNAc...) asparagine glycosylation is present at Asn942. Intrachain disulfides connect Cys1065/Cys1091, Cys1120/Cys1145, and Cys1188/Cys1211. The N-linked (GlcNAc...) asparagine glycan is linked to Asn1133. Asn1229 carries an N-linked (GlcNAc...) asparagine glycan. Cys1234 and Cys1262 are disulfide-bonded. N-linked (GlcNAc...) asparagine glycosylation is present at Asn1294. Cys1304 and Cys1330 are oxidised to a cystine. N-linked (GlcNAc...) asparagine glycosylation is present at Asn1353. Cystine bridges form between Cys1428/Cys1455, Cys1488/Cys1522, and Cys1560/Cys1586. The N-linked (GlcNAc...) asparagine glycan is linked to Asn1513. 4 N-linked (GlcNAc...) asparagine glycosylation sites follow: Asn1613, Asn1631, Asn1648, and Asn1674. Cys1614 and Cys1641 are disulfide-bonded. A disulfide bridge links Cys1691 with Cys1720. N-linked (GlcNAc...) asparagine glycosylation is found at Asn1762, Asn1782, Asn1866, and Asn1890. An intrachain disulfide couples Cys1955 to Cys1979. Residues 1955–2083 (CGGEVRHSQG…PLFKARYEKV (129 aa)) form the CUB 11 domain. N-linked (GlcNAc...) asparagine glycans are attached at residues Asn2005, Asn2016, and Asn2017. A disulfide bridge links Cys2006 with Cys2027. A disordered region spans residues 2052-2071 (ASDGNDDDDDTPDIDQQDSN). Positions 2055–2067 (GNDDDDDTPDIDQ) are enriched in acidic residues. The N-linked (GlcNAc...) asparagine glycan is linked to Asn2193. Intrachain disulfides connect Cys2207–Cys2238 and Cys2265–Cys2295. CUB domains follow at residues 2207 to 2334 (CGGD…YRLT), 2335 to 2463 (CNSF…IKEQ), 2467 to 2588 (CPSG…YGIA), 2590 to 2717 (CGGT…VTMS), and 2721 to 2859 (CGGR…YMAI). N-linked (GlcNAc...) asparagine glycosylation is found at Asn2301 and Asn2305. Disulfide bonds link Cys2335–Cys2368 and Cys2395–Cys2424. Asn2434 is a glycosylation site (N-linked (GlcNAc...) asparagine). Cystine bridges form between Cys2467–Cys2498 and Cys2590–Cys2619. N-linked (GlcNAc...) asparagine glycosylation is found at Asn2599, Asn2645, Asn2657, and Asn2692. Cys2646 and Cys2668 are disulfide-bonded. Cystine bridges form between Cys2721/Cys2747 and Cys2786/Cys2809. N-linked (GlcNAc...) asparagine glycans are attached at residues Asn2811, Asn2845, Asn2875, and Asn2988. Cystine bridges form between Cys2996-Cys3025, Cys3052-Cys3074, Cys3127-Cys3154, and Cys3181-Cys3217. CUB domains are found at residues 2996 to 3121 (CGGV…YEFL), 3127 to 3254 (CGYH…WEAE), 3255 to 3385 (CGAI…YSIN), 3387 to 3508 (CGDN…VISS), 3515 to 3641 (CGGK…YSIV), 3645 to 3783 (CGGW…YNIL), and 3786 to 3900 (CNRT…YYTV). N-linked (GlcNAc...) asparagine glycosylation occurs at Asn3235. Disulfide bonds link Cys3255/Cys3281, Cys3315/Cys3335, and Cys3387/Cys3418. N-linked (GlcNAc...) asparagine glycosylation is found at Asn3421 and Asn3461. 2 cysteine pairs are disulfide-bonded: Cys3445-Cys3468 and Cys3515-Cys3544. A glycan (N-linked (GlcNAc...) asparagine) is linked at Asn3635. 2 cysteine pairs are disulfide-bonded: Cys3645-Cys3680 and Cys3708-Cys3742. N-linked (GlcNAc...) asparagine glycans are attached at residues Asn3770, Asn3787, Asn3812, Asn3858, and Asn3930. 2 disulfides stabilise this stretch: Cys3786–Cys3815 and Cys3845–Cys3863.

Its subcellular location is the secreted. Functionally, cotransporter which plays a role in lipoprotein, vitamin and iron metabolism, by facilitating their uptake. This Caenorhabditis elegans protein is Cubilin homolog.